A 195-amino-acid chain; its full sequence is Myelin-associated neurite-outgrowth inhibitor (195 aa).

Residues 1–18 (MNPVYSPGSSGVPYANAK) lie on the Cytoplasmic side of the membrane. Residues 19-43 (GIGYPAGFPMGYAAAAPAYSPNMYA) form a helical membrane-spanning segment. Topologically, residues 44-143 (GPNPAFQPGY…APIPQPRGNG (100 aa)) are extracellular. Residues 144-162 (VAMGMVAGTTMAMSAGTLL) traverse the membrane as a helical segment. Residues 163–195 (TSHYPTPVAPHQVTMPTYRPPGTPTYSYVPPQW) are Cytoplasmic-facing.

This sequence belongs to the FAM168 family.

The protein localises to the cytoplasm. Its subcellular location is the perinuclear region. The protein resides in the cell membrane. It is found in the cell projection. It localises to the axon. Its function is as follows. Inhibitor of neuronal axonal outgrowth. The protein is Myelin-associated neurite-outgrowth inhibitor (fam168b) of Xenopus tropicalis (Western clawed frog).